The primary structure comprises 320 residues: SUMO-activating enzyme subunit 1B-1 (320 aa).

An N-acetylmethionine modification is found at M1.

The protein belongs to the ubiquitin-activating E1 family. As to quaternary structure, heterodimer of SAE1A or SAE1B and SAE2. The complex binds SUMO proteins via SAE2.

It is found in the nucleus. The protein operates within protein modification; protein sumoylation. In terms of biological role, the dimeric enzyme acts as an E1 ligase for SUMO1 and SUMO2. It mediates ATP-dependent activation of SUMO proteins and formation of a thioester with a conserved cysteine residue on SAE2. Functionally redundant with its paralog SAE1A. This is SUMO-activating enzyme subunit 1B-1 (SAE1B-1) from Arabidopsis thaliana (Mouse-ear cress).